Reading from the N-terminus, the 446-residue chain is 3',5'-cyclic-AMP phosphodiesterase 7B (446 aa).

Residues 97 to 420 (LDEDYLGQAR…AQWKSLLSNQ (324 aa)) enclose the PDEase domain. The active-site Proton donor is the His173. His177, His213, Asp214, and Asp323 together coordinate a divalent metal cation. The disordered stretch occupies residues 422-446 (RRRGSGQDLAGPAPETLEQTEGATP). Ser426 bears the Phosphoserine mark. At Thr445 the chain carries Phosphothreonine.

It belongs to the cyclic nucleotide phosphodiesterase family. PDE7 subfamily. Requires a divalent metal cation as cofactor. As to expression, highly expressed in brain.

It catalyses the reaction 3',5'-cyclic AMP + H2O = AMP + H(+). Its pathway is purine metabolism; 3',5'-cyclic AMP degradation; AMP from 3',5'-cyclic AMP: step 1/1. Inhibited by dipyridamole, IBMX and SCH 51866. Insensitive to zaprinast, rolipram, and milrinone. Hydrolyzes the second messenger cAMP, which is a key regulator of many important physiological processes. May be involved in the control of cAMP-mediated neural activity and cAMP metabolism in the brain. The sequence is that of 3',5'-cyclic-AMP phosphodiesterase 7B from Mus musculus (Mouse).